The chain runs to 182 residues: UPF0690 protein C1orf52 homolog (182 aa).

Positions 1–61 (MAAEEKDPLS…AEKRLPGPDE (61 aa)) are disordered. The segment covering 23–32 (SDEEDNSEPE) has biased composition (acidic residues). Residues 51 to 61 (KAEKRLPGPDE) are compositionally biased toward basic and acidic residues. T67 carries the phosphothreonine modification. Y132 is modified (phosphotyrosine). The segment at 132-182 (YEDNGDDAPQNAKKARLLPEGEETVESDDEKDEHTSKKRKIELGEPTKKKK) is disordered. Acidic residues predominate over residues 151 to 162 (EGEETVESDDEK). A Phosphoserine modification is found at S158. Basic and acidic residues predominate over residues 172 to 182 (IELGEPTKKKK).

This sequence belongs to the UPF0690 family.

This Bos taurus (Bovine) protein is UPF0690 protein C1orf52 homolog.